The primary structure comprises 155 residues: Large ribosomal subunit protein uL16m (155 aa).

This sequence belongs to the universal ribosomal protein uL16 family.

It localises to the mitochondrion. The polypeptide is Large ribosomal subunit protein uL16m (RPL16) (Petunia hybrida (Petunia)).